The primary structure comprises 162 residues: Globin CTT-VIIB-7 (162 aa).

The first 16 residues, 1–16 (MKFFAVLALCVVGAIA), serve as a signal peptide directing secretion. Positions 18–162 (PLSADEANLV…TYAVALKSLE (145 aa)) constitute a Globin domain. 2 residues coordinate heme b: histidine 76 and histidine 111.

The protein belongs to the globin family. Homodimer.

The protein is Globin CTT-VIIB-7 (CTT-7B7) of Chironomus thummi piger (Midge).